A 234-amino-acid chain; its full sequence is Lipoprotein-releasing system ATP-binding protein LolD (234 aa).

The ABC transporter domain occupies 13-233 (IYLHEIKRQY…SLSDGQVVEL (221 aa)). 49-56 (APSGSGKS) contributes to the ATP binding site.

The protein belongs to the ABC transporter superfamily. Lipoprotein translocase (TC 3.A.1.125) family. In terms of assembly, the complex is composed of two ATP-binding proteins (LolD) and two transmembrane proteins (LolC and LolE).

Its subcellular location is the cell inner membrane. Part of the ABC transporter complex LolCDE involved in the translocation of mature outer membrane-directed lipoproteins, from the inner membrane to the periplasmic chaperone, LolA. Responsible for the formation of the LolA-lipoprotein complex in an ATP-dependent manner. The polypeptide is Lipoprotein-releasing system ATP-binding protein LolD (Bradyrhizobium diazoefficiens (strain JCM 10833 / BCRC 13528 / IAM 13628 / NBRC 14792 / USDA 110)).